The chain runs to 419 residues: Phosphatidylcholine:ceramide cholinephosphotransferase 1 (419 aa).

The SAM domain occupies 13-76 (WSPKKVADWL…LDMIETLKME (64 aa)). Residue Ser14 is modified to Phosphoserine. 5 helical membrane-spanning segments follow: residues 142-162 (LLAFLYALSCFVLTTVMISVV), 190-210 (FSICEINGMILVGLWLFQWLL), 221-241 (FFCIVGTLYLYRCITMYVTTL), 282-302 (MCGDYLYSGHTVMLTLTYLFI), and 310-330 (LWWYHWICWLLSVVGIFCILL). The active site involves His291. Residues 331 to 419 (AHDHYTVDVV…VKYSRLVNDT (89 aa)) lie on the Cytoplasmic side of the membrane. Catalysis depends on residues His334 and Asp338.

This sequence belongs to the sphingomyelin synthase family.

Its subcellular location is the golgi apparatus membrane. It catalyses the reaction an N-acylsphing-4-enine + a 1,2-diacyl-sn-glycero-3-phosphocholine = a sphingomyelin + a 1,2-diacyl-sn-glycerol. It carries out the reaction 1-(9Z-octadecenoyl)-2-acyl-sn-3-glycerol + a sphingomyelin = a 1-(9Z-octadecenoyl)-2-acyl-sn-glycero-3-phosphocholine + an N-acylsphing-4-enine. The enzyme catalyses N-hexadecanoylsphinganine + a 1,2-diacyl-sn-glycero-3-phosphocholine = N-hexadecanoyl-sphinganine-1-phosphocholine + a 1,2-diacyl-sn-glycerol. The catalysed reaction is N-hexadecanoyl-(4R)-hydroxysphinganine + a 1,2-diacyl-sn-glycero-3-phosphocholine = N-hexadecanoyl-(4R)-hydroxysphinganine-phosphocholine + a 1,2-diacyl-sn-glycerol. It catalyses the reaction an N-acylsphing-4-enine + a 1,2-diacyl-sn-glycero-3-phosphoethanolamine = an N-acylsphing-4-enine 1-phosphoethanolamine + a 1,2-diacyl-sn-glycerol. The protein operates within sphingolipid metabolism. Major sphingomyelin synthase at the Golgi apparatus. Catalyzes the reversible transfer of phosphocholine moiety in sphingomyelin biosynthesis: in the forward reaction transfers phosphocholine head group of phosphatidylcholine (PC) on to ceramide (CER) to form ceramide phosphocholine (sphingomyelin, SM) and diacylglycerol (DAG) as by-product, and in the reverse reaction transfers phosphocholine from SM to DAG to form PC and CER. The direction of the reaction depends on the levels of CER and DAG in Golgi membranes. Converts the newly synthesized CER, that is transported from the endoplasmic reticulum to the trans-Golgi by the Cer transport protein (CERT), to SM. Can form a heteromeric complex with glucosylceramide synthase (GCS) increasing SMS activity and reducing glucosylceramide synthesis, a critical mechanism that controls the metabolic fate of CER in the Golgi. Does not use free phosphorylcholine or CDP-choline as donor. Can also transfer phosphoethanolamine head group of phosphatidylethanolamine (PE) on to CER to form ceramide phosphoethanolamine (CPE). Regulates receptor-mediated signal transduction via mitogenic DAG and proapoptotic CER, as well as via SM, a structural component of membrane rafts that serve as platforms for signal transduction and protein sorting. Plays a role in secretory transport via regulation of DAG pool at the Golgi apparatus and its downstream effects on PRKD1. The chain is Phosphatidylcholine:ceramide cholinephosphotransferase 1 (Sgms1) from Rattus norvegicus (Rat).